The following is a 120-amino-acid chain: Succinate dehydrogenase assembly factor 3, mitochondrial (120 aa).

Residues Met1–Leu36 constitute a mitochondrion transit peptide.

Belongs to the complex I LYR family. SDHAF3 subfamily. In terms of assembly, interacts with SdhB within an SdhA-SdhB subcomplex.

Its subcellular location is the mitochondrion matrix. In terms of biological role, plays an essential role in the assembly of succinate dehydrogenase (SDH), an enzyme complex (also referred to as respiratory complex II) that is a component of both the tricarboxylic acid (TCA) cycle and the mitochondrial electron transport chain, and which couples the oxidation of succinate to fumarate with the reduction of ubiquinone (coenzyme Q) to ubiquinol. Promotes maturation of the iron-sulfur protein subunit SdhB of the SDH catalytic dimer, protecting it from the deleterious effects of oxidants. This Drosophila melanogaster (Fruit fly) protein is Succinate dehydrogenase assembly factor 3, mitochondrial.